The chain runs to 88 residues: Small ribosomal subunit protein bS16 (88 aa).

The protein belongs to the bacterial ribosomal protein bS16 family.

This is Small ribosomal subunit protein bS16 from Geobacter metallireducens (strain ATCC 53774 / DSM 7210 / GS-15).